The following is a 363-amino-acid chain: Ribonuclease P protein subunit p40 (363 aa).

As to quaternary structure, component of nuclear RNase P and RNase MRP ribonucleoproteins. RNase P consists of a catalytic RNA moiety and about 10 protein subunits; POP1, POP4, POP5, POP7, RPP14, RPP21, RPP25, RPP30, RPP38 and RPP40. Within the RNase P complex, POP1, POP7 and RPP25 form the 'finger' subcomplex, POP5, RPP14, RPP40 and homodimeric RPP30 form the 'palm' subcomplex, and RPP21, POP4 and RPP38 form the 'wrist' subcomplex. All subunits of the RNase P complex interact with the catalytic RNA. Several subunits of RNase P are also part of the RNase MRP complex. RNase MRP consists of a catalytic RNA moiety and about 8 protein subunits; POP1, POP7, RPP25, RPP30, RPP38, RPP40 and possibly also POP4 and POP5.

The protein localises to the nucleus. It is found in the nucleolus. In terms of biological role, component of ribonuclease P, a ribonucleoprotein complex that generates mature tRNA molecules by cleaving their 5'-ends. Also a component of the MRP ribonuclease complex, which cleaves pre-rRNA sequences. In Homo sapiens (Human), this protein is Ribonuclease P protein subunit p40 (RPP40).